The sequence spans 101 residues: A-type ATP synthase subunit K (101 aa).

Transmembrane regions (helical) follow at residues 4 to 24 (ALLISLILPILIGGLVAAAQA), 32 to 52 (FMGINIGAGLAVGLAAIGAGV), and 75 to 95 (VLIFVAIGEGIAVYGIIFAVL).

It belongs to the V-ATPase proteolipid subunit family. As to quaternary structure, has multiple subunits with at least A(3), B(3), C, D, E, F, H, I and proteolipid K(x).

It is found in the cell membrane. In terms of biological role, component of the A-type ATP synthase that produces ATP from ADP in the presence of a proton gradient across the membrane. This Sulfolobus acidocaldarius (strain ATCC 33909 / DSM 639 / JCM 8929 / NBRC 15157 / NCIMB 11770) protein is A-type ATP synthase subunit K.